The primary structure comprises 357 residues: MSDKTPRKPTAFRLEQPARVSAASEQEEPRHPRAVKDLEQITPQADVFDLTDDEAAELEILDPAFEAPERKGWSLSRILFGALGILVSFAIGIWTEDLIRALFARADWLGWTALGVAMVALAAFAAIILRELVALRRLASVQHLRKDAADAAERDDMAAARKAVDALRTIAAGIPETAKGRQLLDSLTDDIIDGRDLIRLAETEILRPLDREARTLVLNASKRVSIVTAISTRALVDIGYVIFESARLIRRLSQLYGGRPGTLGFIKLARRVIAHLAVTGTIAMGDSVIQQLVGHGLASRLSAKLGEGVVNGLMTARIGIAAMDVVRPFPFNAEKRPGIGDFIGELARLNSDRNARK.

A disordered region spans residues 1–36; the sequence is MSDKTPRKPTAFRLEQPARVSAASEQEEPRHPRAVK. Positions 27-36 are enriched in basic and acidic residues; sequence EEPRHPRAVK. 2 helical membrane-spanning segments follow: residues 78-98 and 109-129; these read ILFG…TEDL and LGWT…AIIL.

Belongs to the UPF0283 family.

Its subcellular location is the cell inner membrane. In Brucella suis (strain ATCC 23445 / NCTC 10510), this protein is UPF0283 membrane protein BSUIS_A1077.